Consider the following 117-residue polypeptide: Immunoglobulin lambda variable 7-46 (117 aa).

The first 19 residues, Met-1–Ser-19, serve as a signal peptide directing secretion. The interval Gln-20–Ser-44 is framework-1. The 98-residue stretch at Gln-20–Arg-117 folds into the Ig-like domain. Cys-41 and Cys-109 are joined by a disulfide. The tract at residues Thr-45–Tyr-53 is complementarity-determining-1. A framework-2 region spans residues Pro-54–Tyr-70. Residues Asp-71–Ser-73 are complementarity-determining-2. The interval Asn-74 to Cys-109 is framework-3. The segment at Leu-110–Arg-117 is complementarity-determining-3.

Immunoglobulins are composed of two identical heavy chains and two identical light chains; disulfide-linked.

The protein resides in the secreted. Its subcellular location is the cell membrane. V region of the variable domain of immunoglobulin light chains that participates in the antigen recognition. Immunoglobulins, also known as antibodies, are membrane-bound or secreted glycoproteins produced by B lymphocytes. In the recognition phase of humoral immunity, the membrane-bound immunoglobulins serve as receptors which, upon binding of a specific antigen, trigger the clonal expansion and differentiation of B lymphocytes into immunoglobulins-secreting plasma cells. Secreted immunoglobulins mediate the effector phase of humoral immunity, which results in the elimination of bound antigens. The antigen binding site is formed by the variable domain of one heavy chain, together with that of its associated light chain. Thus, each immunoglobulin has two antigen binding sites with remarkable affinity for a particular antigen. The variable domains are assembled by a process called V-(D)-J rearrangement and can then be subjected to somatic hypermutations which, after exposure to antigen and selection, allow affinity maturation for a particular antigen. The protein is Immunoglobulin lambda variable 7-46 of Homo sapiens (Human).